Consider the following 687-residue polypeptide: MVTRKKPVKRNAEAAEIQVEQEEDASQPKVAKELMVVAQEVKIIRALACNDVVERNRQIRILRKWFKARAGSSFPFNEDDFMRIWKGLYYTMWMSDKPLVQEELAEKLAQMVDSFGGNTACSLAYFSAFMRTMCQEYFGIDQWRMDKFLMLTRRMVRYLLRFLKQNNWNADLIAAFNSSMQLSVMSEQPKSRGMTMHYLDVFFEELAKAANGEITAAQVNMFLRPFVTYIATQRDAKLVAQCRTRVLYHLMYQSDLGRQYSEKYNAWKQMGFPTASIDDIEKLDSGFDEEDDEVNAEEEQPRATSLDPRAGNVDVHMPELPLNADCVLDELQTQLRTNDFNSKRRKGLRKLIQIFETYQRGEFPLGVRTMPKVEGQTLSEMVEQKVAALDKMEDEVFATGRKLKKLNKSKRKRLLQSINFEEVDEHNYDEVISKALPPELQKKVNYNAKVRSSINNAWVVEEVKEAEPKSKKAKKEEPPQQNKDDQTKVKKKSQLKPKNDQSKPKIEDQPTLKAEKEEPAKRKKLDHSKTKEEQSKPKTDEQPKPTPKVEGQSKAKPTPKTKAAGVDDDAPTNGWDAPLEDGEQDIFVPSRKLQVKQANSKLPQSTPKQPARAEFATPQTGSGKHVRIVTKSNCIYPKSDYYRQLKLSPQVPYDANRLPGKSALKPHWIPGPIHPSYKAKRLFNDTL.

The span at 288–298 (DEEDDEVNAEE) shows a compositional bias: acidic residues. 2 disordered regions span residues 288–312 (DEEDDEVNAEEEQPRATSLDPRAGN) and 463–624 (VKEA…GSGK). 3 stretches are compositionally biased toward basic and acidic residues: residues 463-488 (VKEAEPKSKKAKKEEPPQQNKDDQTK), 497-520 (PKNDQSKPKIEDQPTLKAEKEEPA), and 527-543 (HSKTKEEQSKPKTDEQP). Residues 554–564 (KAKPTPKTKAA) show a composition bias toward low complexity. Positions 596-608 (KQANSKLPQSTPK) are enriched in polar residues. A phosphothreonine mark is found at threonine 617 and threonine 620. Serine 622 bears the Phosphoserine mark.

Belongs to the RRP1 family.

The protein localises to the nucleus. May be involved in the generation of 28S rRNA. The protein is Ribosomal RNA processing protein 1 homolog (Nnp-1) of Drosophila melanogaster (Fruit fly).